Consider the following 311-residue polypeptide: Olfactory receptor 2M4 (311 aa).

The Extracellular portion of the chain corresponds to 1–25; the sequence is MVWENQTFNSIFILLGIFNHSPTHT. The N-linked (GlcNAc...) asparagine glycan is linked to asparagine 5. Residues 26–49 form a helical membrane-spanning segment; that stretch reads FLFSLVLGIFSLALMENISMVLLI. At 50-57 the chain is on the cytoplasmic side; that stretch reads YIEKQLHT. Residues 58–79 traverse the membrane as a helical segment; that stretch reads PMYFLLSQLSLMDLMLICTTLP. At 80–100 the chain is on the extracellular side; it reads KMIFSYLSGKKSISLAGCGTQ. A disulfide bond links cysteine 97 and cysteine 189. The chain crosses the membrane as a helical span at residues 101–120; that stretch reads IFFYVSLLGAECFLLAVMAY. Over 121–139 the chain is Cytoplasmic; it reads DRYVAICHPLQYTILMNPK. A helical transmembrane segment spans residues 140-158; sequence LCVFMTVASWTLGSLDGII. Topologically, residues 159-195 are extracellular; the sequence is VLAAVLSFSYCSSLEIHHFFCDVAALLPLSCTETSAF. Residues 196-219 traverse the membrane as a helical segment; the sequence is ERLLVICCVVMLIFPVSVIILSYS. Over 220–236 the chain is Cytoplasmic; it reads HVLRAVIHMGSGESRRK. The helical transmembrane segment at 237–259 threads the bilayer; sequence AFTTCSSHLSVVGLYYGAAMFMY. The Extracellular portion of the chain corresponds to 260 to 272; it reads MRPASKHTPDQDK. Residues 273 to 292 form a helical membrane-spanning segment; sequence MVSAFYTILTPMLNPLIYSL. Topologically, residues 293 to 311 are cytoplasmic; it reads RNKEVFRALQKVLKKRKLI.

Belongs to the G-protein coupled receptor 1 family.

Its subcellular location is the cell membrane. Functionally, odorant receptor. The chain is Olfactory receptor 2M4 (OR2M4) from Homo sapiens (Human).